A 303-amino-acid chain; its full sequence is uncharacterized protein (303 aa).

NADP(+) contacts are provided by residues 7 to 12 (GAGGVG) and Asn-101. Lys-184 functions as the Proton donor in the catalytic mechanism. Glu-267 lines the NADP(+) pocket.

Belongs to the ketopantoate reductase family.

This is an uncharacterized protein from Bacillus subtilis (strain 168).